The chain runs to 138 residues: Ribosome maturation factor RimP (138 aa).

It belongs to the RimP family.

The protein localises to the cytoplasm. Its function is as follows. Required for maturation of 30S ribosomal subunits. This Campylobacter curvus (strain 525.92) protein is Ribosome maturation factor RimP.